Reading from the N-terminus, the 93-residue chain is uncharacterized protein (93 aa).

Transmembrane regions (helical) follow at residues 8-28 and 54-74; these read FIGI…LLAS and ACFL…YLIL.

It is found in the cell membrane. This is an uncharacterized protein from Methanocaldococcus jannaschii (strain ATCC 43067 / DSM 2661 / JAL-1 / JCM 10045 / NBRC 100440) (Methanococcus jannaschii).